The primary structure comprises 94 residues: Venom protein 59.1 (94 aa).

A signal peptide spans 1 to 22 (MNSREMFCVFILFASFFYCSYA). Disulfide bonds link Cys-19–Cys-47, Cys-26–Cys-49, Cys-32–Cys-50, Cys-38–Cys-53, Cys-61–Cys-76, and Cys-70–Cys-91. One can recognise an IGFBP N-terminal domain in the interval 23 to 94 (EQECNCDKSC…GEALEICLRA (72 aa)).

Expressed by the venom gland.

The protein resides in the secreted. This chain is Venom protein 59.1, found in Lychas mucronatus (Chinese swimming scorpion).